A 237-amino-acid polypeptide reads, in one-letter code: uncharacterized protein (237 aa).

21 to 28 is a binding site for ATP; sequence GCDGSGKS.

This sequence to E.coli YghR and YghT.

This is an uncharacterized protein from Escherichia coli (strain K12).